The chain runs to 322 residues: Undecaprenyl-phosphate 4-deoxy-4-formamido-L-arabinose transferase (322 aa).

The Cytoplasmic portion of the chain corresponds to 1 to 235; the sequence is MFEIHPVKKV…TCLTTTPLRM (235 aa). A helical transmembrane segment spans residues 236-256; the sequence is LSLLGSIIAIGGFSIAVLLVI. At 257 to 269 the chain is on the periplasmic side; the sequence is LRLTFGPQWAAEG. A helical membrane pass occupies residues 270 to 290; it reads VFMLFAVLFTFIGAQFIGMGL. The Cytoplasmic segment spans residues 291-322; it reads LGEYIGRIYTDVRARPRYFVQQVIRPSSKENE.

Belongs to the glycosyltransferase 2 family.

The protein localises to the cell inner membrane. The enzyme catalyses UDP-4-deoxy-4-formamido-beta-L-arabinose + di-trans,octa-cis-undecaprenyl phosphate = 4-deoxy-4-formamido-alpha-L-arabinopyranosyl di-trans,octa-cis-undecaprenyl phosphate + UDP. It functions in the pathway glycolipid biosynthesis; 4-amino-4-deoxy-alpha-L-arabinose undecaprenyl phosphate biosynthesis; 4-amino-4-deoxy-alpha-L-arabinose undecaprenyl phosphate from UDP-4-deoxy-4-formamido-beta-L-arabinose and undecaprenyl phosphate: step 1/2. The protein operates within bacterial outer membrane biogenesis; lipopolysaccharide biosynthesis. Functionally, catalyzes the transfer of 4-deoxy-4-formamido-L-arabinose from UDP to undecaprenyl phosphate. The modified arabinose is attached to lipid A and is required for resistance to polymyxin and cationic antimicrobial peptides. The chain is Undecaprenyl-phosphate 4-deoxy-4-formamido-L-arabinose transferase from Escherichia coli O45:K1 (strain S88 / ExPEC).